Here is a 156-residue protein sequence, read N- to C-terminus: Arginine repressor (156 aa).

It belongs to the ArgR family.

The protein localises to the cytoplasm. Its pathway is amino-acid biosynthesis; L-arginine biosynthesis [regulation]. Its function is as follows. Regulates arginine biosynthesis genes. The protein is Arginine repressor of Aeromonas hydrophila subsp. hydrophila (strain ATCC 7966 / DSM 30187 / BCRC 13018 / CCUG 14551 / JCM 1027 / KCTC 2358 / NCIMB 9240 / NCTC 8049).